Reading from the N-terminus, the 589-residue chain is Transcription factor MYC4 (589 aa).

Positions 99-150 are JAZ-interaction domain; that stretch reads NTVLLGWGDGYYKGEEEKSRKKKSNPASAAEQEHRKRVIRELNSLISGGVGG. Disordered stretches follow at residues 114 to 133, 291 to 326, 340 to 359, and 381 to 422; these read EEKS…QEHR, AAPV…PNPK, IENG…VSNN, and ASVA…EAER. Low complexity predominate over residues 296-308; it reads NNGGNDSTSNSDS. Residues 309–322 show a composition bias toward polar residues; it reads QPISKLCNGSSVEN. The span at 381–398 shows a compositional bias: basic and acidic residues; the sequence is ASVAKEAESNRVVVEPEK. Over residues 399 to 408 the composition is skewed to basic residues; the sequence is KPRKRGRKPA. Basic and acidic residues predominate over residues 409 to 422; that stretch reads NGREEPLNHVEAER. Residues 412 to 461 form the bHLH domain; the sequence is EEPLNHVEAERQRREKLNQRFYSLRAVVPNVSKMDKASLLGDAISYISEL.

In terms of assembly, homo- and heterodimer. Interacts with MYB28, MYB29, MYB34, MYB51, MYB76, MYB122, MYC3, AFPH2/NINJA and the JAZ repressors TIFY10A/JAZ1, TIFY10B/JAZ2, TIFY6B/JAZ3, TIFY6A/JAZ4, TIFY11A/JAZ5, TIFY11B/JAZ6, TIFY5B/JAZ7, TIFY5A/JAZ8, TIFY7/JAZ9, TIFY9/JAZ10, TIFY3A/JAZ11 and TIFY3B/JAZ12. Expressed constitutively at low levels. Preferentially expressed in vascular tissues.

The protein localises to the nucleus. In terms of biological role, transcription factor involved in jasmonic acid (JA) gene regulation. With MYC2 and MYC3, controls additively subsets of JA-dependent responses. Can form complexes with all known glucosinolate-related MYBs to regulate glucosinolate biosynthesis. Binds to the G-box (5'-CACGTG-3') of promoters. Activates multiple TIFY/JAZ promoters. The polypeptide is Transcription factor MYC4 (MYC4) (Arabidopsis thaliana (Mouse-ear cress)).